The sequence spans 530 residues: Glucose-6-phosphate isomerase (530 aa).

Glutamate 322 serves as the catalytic Proton donor. Active-site residues include histidine 351 and lysine 455.

The protein belongs to the GPI family.

It localises to the cytoplasm. The enzyme catalyses alpha-D-glucose 6-phosphate = beta-D-fructose 6-phosphate. It participates in carbohydrate biosynthesis; gluconeogenesis. The protein operates within carbohydrate degradation; glycolysis; D-glyceraldehyde 3-phosphate and glycerone phosphate from D-glucose: step 2/4. Its function is as follows. Catalyzes the reversible isomerization of glucose-6-phosphate to fructose-6-phosphate. This is Glucose-6-phosphate isomerase from Geotalea daltonii (strain DSM 22248 / JCM 15807 / FRC-32) (Geobacter daltonii).